The primary structure comprises 627 residues: BEL1-like homeodomain protein 4 (627 aa).

The tract at residues 206-225 (SSQHHHHQVVGHFGSSSSSP) is disordered. The segment covering 215–225 (VGHFGSSSSSP) has biased composition (low complexity). Residues 241-257 (SKYTKPAQELLEEFCSV) are SR/KY domain. The interval 263–307 (KKNKLSRNNSNPNTTGGGGGGGSSSSAGTANDSPPLSPADRIEHQ) is disordered. A BELL domain region spans residues 302–373 (DRIEHQRRKV…CLKDAVAVQL (72 aa)). Positions 424–486 (AWRPQRGLPE…NARVRLWKPM (63 aa)) form a DNA-binding region, homeobox. The disordered stretch occupies residues 494–530 (EAKEREEAEEENENQQQQRRQQQTNNNDTKPNNNENN). Low complexity predominate over residues 507–530 (NQQQQRRQQQTNNNDTKPNNNENN).

The protein belongs to the TALE/BELL homeobox family. May form heterodimeric complexes with TALE/KNOX proteins. Interacts with OFP1, OFP2 and OFP5. Interacts with KNATM, isoform KNATM-B. As to expression, expressed in lateral organs.

Its subcellular location is the nucleus. In terms of biological role, transcription factor that establishes leaf shape by repressing growth in specific subdomains of the leaf. Negatively regulates knox homeobox gene KNAT1/BP expression. The sequence is that of BEL1-like homeodomain protein 4 (BLH4) from Arabidopsis thaliana (Mouse-ear cress).